The sequence spans 946 residues: MSISMKDVDPAFRGVGQKDGLEVWRIENFKPVPVPTSSHGKFYMGDSYIILKTTALKNGSFRHDLHYWLGKDTSQDEAGTAAILTVELDAALGGRAVQYREVQGGETEKLLSYFRPCIMPQPGGVASGFNHVEVNQQDHVTRLYVCQGKHVVHVKEVPFVRSSLNHEDIFILDTANKIFQFNGSNSCIQERAKALEVVQYIKDTFHEGKCEVAAVEDGKLMADTEAGEFWGLFGGFAPLPKKTSSEDNGDDKETVTKLLCFNQGTLEHISFESLEHELLETNKCYLLDCGAEMYVWMGRGTSLQVRKGASEAAEKLLIDENRKGSNVIKVIEGFETIMFKSKFNKWPPTPDLKLSSEDGRGKVAALLRSQGLDVKGLMKAAPEEEEPQPYIDCTGHLQVWRVNGDGKTLLSSSDQSKLYTGDCYIFQYTYTGDDKEECLIGTWFGKKSVEEDRTSAISLASKMFQAAKFQAAQARLYEGKEPIQFFVIFQSLQVFKGGLSSGYKNFIAVNGTDDDTYVEGGLALFRIQGSGSENMQAIQVDAVSSSLNSSYCYILHNGNTVFTWTGNLTTSLDNDLVERQLDVIKPDLPSRSQKEGRETDQFWELLGGKCKYSNKKIGKENESDPHLFSCILSKENLKVKEIHHFTQDDLMAEDIFVLDCRTDLFVWVGQEVDAKLRSQAMDIGEKFLLHDFLMENLSQDTPIFIVTEGSEPQFFTRFFTWDSAKSLMHGSSYQRKLAIVKGGATPSLDKPKRRTPAFSGRNAGQDKSQQRTRSMSHSPERHRIRGRSPAFTAIASAFENPSTRYLSTPPPAVKKLFPRSGGSELPKTSSKQSAINALTSAFEGPTKSTIPKSVKVSPEAEKAIQEEGSTIGESENEPEDDENSTIYPYERLTTTSDDPAPDIDVTKREVYLSSVEFAEKFGMTRASFKNLPKWKQNRLKSDLQLF.

Gelsolin-like repeat units lie at residues 28–109, 152–219, 274–339, and 641–715; these read NFKP…ETEK, VHVK…EDGK, LEHE…TIMF, and EIHH…PQFF. Disordered regions lie at residues 744-783 and 846-902; these read ATPS…ERHR and TKST…PAPD. Polar residues predominate over residues 765–777; that stretch reads QDKSQQRTRSMSH. The segment covering 874–883 has biased composition (acidic residues); that stretch reads SENEPEDDEN. Positions 881-946 constitute an HP domain; the sequence is DENSTIYPYE…NRLKSDLQLF (66 aa).

The protein belongs to the villin/gelsolin family.

The protein resides in the cytoplasm. The protein localises to the cytoskeleton. Functionally, ca(2+)-regulated actin-binding protein. Binds actin microfilaments (MFs). Involved in actin filament bundling, severing and capping. Caps the barbed end of actin filaments and is able to sever them in a calcium-dependent manner. This Oryza sativa subsp. indica (Rice) protein is Villin-4.